Here is a 162-residue protein sequence, read N- to C-terminus: Ribose-5-phosphate isomerase B (162 aa).

Residues 11–12 and 70–74 each bind D-ribulose 5-phosphate; these read DH and GSGNG. Glu75 acts as the Proton acceptor in catalysis. The Proton donor role is filled by His102. Positions 103, 113, 137, and 141 each coordinate D-ribulose 5-phosphate.

The protein belongs to the LacAB/RpiB family. As to quaternary structure, homodimer.

The catalysed reaction is aldehydo-D-ribose 5-phosphate = D-ribulose 5-phosphate. It functions in the pathway carbohydrate degradation; pentose phosphate pathway; D-ribose 5-phosphate from D-ribulose 5-phosphate (non-oxidative stage): step 1/1. Its function is as follows. Catalyzes the interconversion of ribulose-5-P and ribose-5-P. This Mycobacterium bovis (strain ATCC BAA-935 / AF2122/97) protein is Ribose-5-phosphate isomerase B.